A 206-amino-acid polypeptide reads, in one-letter code: Thiamine-phosphate synthase (206 aa).

4-amino-2-methyl-5-(diphosphooxymethyl)pyrimidine is bound by residues 36–40 (QLRAK) and asparagine 68. 2 residues coordinate Mg(2+): aspartate 69 and aspartate 88. Residue serine 105 participates in 4-amino-2-methyl-5-(diphosphooxymethyl)pyrimidine binding. A 2-[(2R,5Z)-2-carboxy-4-methylthiazol-5(2H)-ylidene]ethyl phosphate-binding site is contributed by 131 to 133 (TPT). Lysine 134 serves as a coordination point for 4-amino-2-methyl-5-(diphosphooxymethyl)pyrimidine. Glycine 162 is a binding site for 2-[(2R,5Z)-2-carboxy-4-methylthiazol-5(2H)-ylidene]ethyl phosphate.

Belongs to the thiamine-phosphate synthase family. Mg(2+) serves as cofactor.

It catalyses the reaction 2-[(2R,5Z)-2-carboxy-4-methylthiazol-5(2H)-ylidene]ethyl phosphate + 4-amino-2-methyl-5-(diphosphooxymethyl)pyrimidine + 2 H(+) = thiamine phosphate + CO2 + diphosphate. It carries out the reaction 2-(2-carboxy-4-methylthiazol-5-yl)ethyl phosphate + 4-amino-2-methyl-5-(diphosphooxymethyl)pyrimidine + 2 H(+) = thiamine phosphate + CO2 + diphosphate. The catalysed reaction is 4-methyl-5-(2-phosphooxyethyl)-thiazole + 4-amino-2-methyl-5-(diphosphooxymethyl)pyrimidine + H(+) = thiamine phosphate + diphosphate. The protein operates within cofactor biosynthesis; thiamine diphosphate biosynthesis; thiamine phosphate from 4-amino-2-methyl-5-diphosphomethylpyrimidine and 4-methyl-5-(2-phosphoethyl)-thiazole: step 1/1. Functionally, condenses 4-methyl-5-(beta-hydroxyethyl)thiazole monophosphate (THZ-P) and 2-methyl-4-amino-5-hydroxymethyl pyrimidine pyrophosphate (HMP-PP) to form thiamine monophosphate (TMP). The sequence is that of Thiamine-phosphate synthase from Thermus thermophilus (strain ATCC BAA-163 / DSM 7039 / HB27).